Here is a 487-residue protein sequence, read N- to C-terminus: Beta-barrel assembly-enhancing protease (487 aa).

An N-terminal signal peptide occupies residues 1 to 27 (MFRQLKKNLVATLIAAMTIGQVAPAFA). Residue His136 coordinates Zn(2+). Glu137 is an active-site residue. The Zn(2+) site is built by His140 and Glu201. Asp205 acts as the Proton donor in catalysis. TPR repeat units follow at residues 309–342 (RAAQYGRALQAMEANKYDEARKTLQPLLAAEPGN), 344–376 (WYLDLATDIDLGQNKANEAINRLKNARDLRTNP), 377–409 (VLQLNLANAYLQGGQPQEAANILNRYTFNNKDD), and 427–460 (DQELAARAEGYALAGRLDQAISLLSSASSQVKLG).

The protein belongs to the peptidase M48 family. BepA subfamily. As to quaternary structure, interacts with BamA and LoiP. Zn(2+) is required as a cofactor.

It is found in the periplasm. With respect to regulation, protease activity is inhibited by the metal chelating reagents 1,10-phenanthroline and EDTA. In terms of biological role, functions both as a chaperone and a metalloprotease. Maintains the integrity of the outer membrane by promoting either the assembly or the elimination of outer membrane proteins, depending on their folding state. Promotes disulfide rearrangement of LptD during its biogenesis, and proteolytic degradation of LptD and BamA when their proper assembly is compromised. May facilitate membrane attachment of LoiP under unfavorable conditions. This chain is Beta-barrel assembly-enhancing protease, found in Escherichia coli (strain K12).